A 207-amino-acid chain; its full sequence is Casparian strip membrane protein 1 (207 aa).

Residue Ala-2 is modified to N-acetylalanine. Over 2–44 the chain is Cytoplasmic; that stretch reads AKESTTIDVGEPNTMTKSTSHVVVDEKKKKGFVAAAAGGGYKR. A helical transmembrane segment spans residues 45–65; sequence GLAVFDFLLRLAAIGITIGAS. Topologically, residues 66-95 are extracellular; that stretch reads SVMFTAEETLPFFTQFLQFQAGYDDFPTFQ. A helical membrane pass occupies residues 96–116; sequence FFVIAIAIVASYLVLSLPFSI. Topologically, residues 117 to 128 are cytoplasmic; sequence VTIVRPLAVAPR. Residues 129–149 form a helical membrane-spanning segment; that stretch reads LILLISDTVVLTLTTAAAAAA. The Extracellular portion of the chain corresponds to 150–181; that stretch reads ASIVYLAHNGNTNTNWLPICQQFGDFCQTAST. Residues 182-202 traverse the membrane as a helical segment; that stretch reads AVVAASISVAFFVLLIVISAI. The Cytoplasmic portion of the chain corresponds to 203 to 207; it reads ALKRH.

This sequence belongs to the Casparian strip membrane proteins (CASP) family. Homodimer and heterodimers.

Its subcellular location is the cell membrane. Regulates membrane-cell wall junctions and localized cell wall deposition. Required for establishment of the Casparian strip membrane domain (CSD) and the subsequent formation of Casparian strips, a cell wall modification of the root endodermis that determines an apoplastic barrier between the intraorganismal apoplasm and the extraorganismal apoplasm and prevents lateral diffusion. The chain is Casparian strip membrane protein 1 from Raphanus raphanistrum (Wild radish).